The sequence spans 1648 residues: MSMFNALNSNIEGEQYEAEEHSRELQIEQSFNILQDALIDLKNKDFEKSDSKFQELFQIDVVKPDRWGMYRNSSPTLDNLRYLCYRNRGMYYHLYLENNYERLNSQELVNCILKAVENLVESIQHSDADFAVTDLLARIFKSFNSVKLERLISEYEFTKQENLSLLLGRHRKFLLNDLTLMMNNYVELTNKLLVPNLSDNTIFERYHLEKYKDIKPEPLAFGPILSRISEMKKQDEEIMKKLDVFNVTLNEESWDEVAKALKNLLPSVKTSSLIGRNMDPYNEIEEPIEAVKFELSEAINNTPSLDRESERQEEEQDNESVRADDKSGNLAPSDIQTNEEARPNKRTDEHIDSTKPLQRSSKRFKEREQENSKELVMDVHKRFFGEFNTLLSYIHILPFCDFDTFASKFIIGSSDKQPEKFIPYTDLYECLKSWSSRYTDIFNQNDYLSSGSNENEELFQLNALLKSNAFDDKESFPRYLNDLDSDHIRSFISEVNAGNLHFHQVRLKLLFKLLGTYDEGNGRRLIIDYLWESQLLKIVLWFVFGIESNIFALINKNKRQCKYLALSIYELLVNHLGNIVEEITNKRIQGHKSADLKSQRNKVEKRIRSWHTLLEQIADEKDKELYVHFQWTHYCFLQYTCDIVDSRLSETLTSLENTIKDSDSSLDIAYPNYRHIPALNLNTVQSQKRKIRIIQNITVEDISEDTNSDTHSENHLETLEKVLLHILHPSTNHSNIDEEMVSFIFNSPFLLKIRLWGVLFSSYVKKSSIQDVQRIYFHVLDFMKGALTSPVYKESNPHGRHQMLLTVLTAIGYLSSQLTAILNSNRWESSDFVLEDYMFEKLLQTFFFFYTVLFYESSAVNDVSNKSFFKRASKSSGKMKDIMIDLATLILYYYDLQAKLRTPAEQGIETTELIWSLHTLFGHFHFCDASNGKFLDLAEKLLCQFINNDSFLQLKQILWCRYHYAIASDNFSPDLHDTKAVEMEKIHSLPLGTYLIKLQYQNKNPYLSSSKTTLKQIMDNIIEKIGDPSTLDNHIISRNSFLLNEYLSRPITADLLKHTFSGATSLYLTSPNDELQQGMTAGLFYVSSLQSLGLYKMRKKSMQARPSELDSIIRMLKNDIIYNTNRFESWILLGKCYSYIVEDDLIWTSDKITVPEKKDVIALTQRKAILCYLMAISIYYSKLDRTIDDKKIILEALDDLGSMLISGYYNPMNKLCFSWKSSAENTMRLSETGEVVMEKTKKITTISDFNIEQSIFLCFNRACSLSGDIKSQDDVFVLNWSSFYNLAKFFFKTDGGNNCKLVAKYITQGCQIAYESSPAKDPIIEPHYLLVNACYKWVKRGVIGVNEALTLLSKDNQFFQEQEEFWVNDEGLAWDYQEKFFFDKIIRLLRHLLSVDKKKWQHRPRYRIARILFDDLGDVNGALEEMDSLISAKSINKNLVNIWKPDFERPGKHFIYTYQYLVLYLDLLFAIKDFNTTGLVIKKLRRFGSGTVNVNELLERAINVYTQSAKIKLQLQDKSYVEQILPTLNYQEFLKISEQLNQVFDQGKYPEEISSGLKLAFQLKKGHSGIAFDSVCLGIYFEYLYFPLARQDQSLTDVNDENNPALPSSGSVTSKSTPDPTSKPSAIKKRVTKKEVFDRVRLLVDKIT.

Disordered regions lie at residues 301 to 371 and 1597 to 1630; these read NTPS…EQEN and DVNDENNPALPSSGSVTSKSTPDPTSKPSAIKKR. Thr302 carries the post-translational modification Phosphothreonine. A Phosphoserine modification is found at Ser304. Residues 339 to 353 show a composition bias toward basic and acidic residues; that stretch reads EEARPNKRTDEHIDS. Residues 1597 to 1610 show a composition bias toward polar residues; it reads DVNDENNPALPSSG. Low complexity predominate over residues 1611-1625; that stretch reads SVTSKSTPDPTSKPS.

It belongs to the HIR3 family. In terms of assembly, component of the HIR complex, composed of HIR1, HIR2, HIR3 and HPC2. This complex may consist of one copy of HIR1 and HIR3 and two copies of HIR2 and HPC2. The HIR complex interacts with ASF1. Interacts with RTT106.

It is found in the nucleus. It localises to the chromosome. In terms of biological role, HIR1, HIR2 and HIR3 are repressors of histone gene transcription. They are required for the periodic repression of three of the four histone gene loci during cell cycle as well as for autogenous regulation of the HTA1-HTB1 locus by H2A and H2B. Also has a role in nucleosome assembly. This Saccharomyces cerevisiae (strain ATCC 204508 / S288c) (Baker's yeast) protein is Histone transcription regulator 3 (HIR3).